Here is a 199-residue protein sequence, read N- to C-terminus: Dephospho-CoA kinase (199 aa).

The region spanning 11 to 199 (RIGLTGGIAS…DLHDQLDALL (189 aa)) is the DPCK domain. Residue 19–24 (ASGKSS) participates in ATP binding.

Belongs to the CoaE family.

Its subcellular location is the cytoplasm. It catalyses the reaction 3'-dephospho-CoA + ATP = ADP + CoA + H(+). It participates in cofactor biosynthesis; coenzyme A biosynthesis; CoA from (R)-pantothenate: step 5/5. Functionally, catalyzes the phosphorylation of the 3'-hydroxyl group of dephosphocoenzyme A to form coenzyme A. The chain is Dephospho-CoA kinase from Synechococcus sp. (strain CC9902).